The chain runs to 139 residues: ATP synthase epsilon chain (139 aa).

This sequence belongs to the ATPase epsilon chain family. F-type ATPases have 2 components, CF(1) - the catalytic core - and CF(0) - the membrane proton channel. CF(1) has five subunits: alpha(3), beta(3), gamma(1), delta(1), epsilon(1). CF(0) has three main subunits: a, b and c.

Its subcellular location is the cell inner membrane. Functionally, produces ATP from ADP in the presence of a proton gradient across the membrane. This Salmonella typhimurium (strain LT2 / SGSC1412 / ATCC 700720) protein is ATP synthase epsilon chain.